A 186-amino-acid polypeptide reads, in one-letter code: Cytochrome b6-f complex iron-sulfur subunit (186 aa).

A helical transmembrane segment spans residues 16–38 (LLSFVTGGAIAATTAATLYPVVL). Residues 74 to 163 (GEPVLTLGLD…ATVSDDKVLI (90 aa)) form the Rieske domain. 4 residues coordinate [2Fe-2S] cluster: C109, H111, C127, and H130. The cysteines at positions 114 and 129 are disulfide-linked.

The protein belongs to the Rieske iron-sulfur protein family. In terms of assembly, the 4 large subunits of the cytochrome b6-f complex are cytochrome b6, subunit IV (17 kDa polypeptide, PetD), cytochrome f and the Rieske protein, while the 4 small subunits are PetG, PetL, PetM and PetN. The complex functions as a dimer. [2Fe-2S] cluster is required as a cofactor.

It is found in the cell inner membrane. It carries out the reaction 2 oxidized [plastocyanin] + a plastoquinol + 2 H(+)(in) = 2 reduced [plastocyanin] + a plastoquinone + 4 H(+)(out). Its function is as follows. Component of the cytochrome b6-f complex, which mediates electron transfer between photosystem II (PSII) and photosystem I (PSI), cyclic electron flow around PSI, and state transitions. The sequence is that of Cytochrome b6-f complex iron-sulfur subunit from Gloeobacter violaceus (strain ATCC 29082 / PCC 7421).